The primary structure comprises 122 residues: Iron-sulfur cluster insertion protein ErpA (122 aa).

Iron-sulfur cluster contacts are provided by C50, C114, and C116.

This sequence belongs to the HesB/IscA family. In terms of assembly, homodimer. Iron-sulfur cluster serves as cofactor.

Required for insertion of 4Fe-4S clusters for at least IspG. In Alkalilimnicola ehrlichii (strain ATCC BAA-1101 / DSM 17681 / MLHE-1), this protein is Iron-sulfur cluster insertion protein ErpA.